The sequence spans 30 residues: Photosystem I reaction center subunit XII (30 aa).

A helical membrane pass occupies residues 7–29 (LIAFFLAFTAGILAIKLGQALYD).

It belongs to the PsaM family.

It localises to the plastid. It is found in the chloroplast thylakoid membrane. This Pinus thunbergii (Japanese black pine) protein is Photosystem I reaction center subunit XII.